Consider the following 380-residue polypeptide: Chaperone protein DnaJ (380 aa).

A J domain is found at D6–G71. The segment at G136–E215 adopts a CR-type zinc-finger fold. Residues C149, C152, C167, C170, C189, C192, C203, and C206 each coordinate Zn(2+). CXXCXGXG motif repeat units follow at residues C149–G156, C167–G174, C189–G196, and C203–G210.

It belongs to the DnaJ family. Homodimer. Zn(2+) serves as cofactor.

Its subcellular location is the cytoplasm. In terms of biological role, participates actively in the response to hyperosmotic and heat shock by preventing the aggregation of stress-denatured proteins and by disaggregating proteins, also in an autonomous, DnaK-independent fashion. Unfolded proteins bind initially to DnaJ; upon interaction with the DnaJ-bound protein, DnaK hydrolyzes its bound ATP, resulting in the formation of a stable complex. GrpE releases ADP from DnaK; ATP binding to DnaK triggers the release of the substrate protein, thus completing the reaction cycle. Several rounds of ATP-dependent interactions between DnaJ, DnaK and GrpE are required for fully efficient folding. Also involved, together with DnaK and GrpE, in the DNA replication of plasmids through activation of initiation proteins. In Acetobacter pasteurianus (strain NBRC 105184 / IFO 3283-01), this protein is Chaperone protein DnaJ.